The primary structure comprises 265 residues: Small ribosomal subunit protein uS2 (265 aa).

The protein belongs to the universal ribosomal protein uS2 family.

In Gluconobacter oxydans (strain 621H) (Gluconobacter suboxydans), this protein is Small ribosomal subunit protein uS2.